Consider the following 594-residue polypeptide: Homeobox protein prospero homolog 1 (594 aa).

Polar residues-rich tracts occupy residues 1 to 13 (MSSG…ATAQ) and 36 to 50 (PPVN…SSNR). Disordered regions lie at residues 1–20 (MSSG…NGFS), 30–180 (IYYS…FQPQ), and 358–389 (DTSS…SASA). Residues 73 to 101 (STSVSSNSSSSSSTSNTNSTPSSSSTSSK) show a composition bias toward low complexity. A compositionally biased stretch (polar residues) spans 105–117 (EGMTETETMTASI). The segment covering 118-135 (EQEKVIQNEESEAGKDGM) has biased composition (basic and acidic residues). Acidic residues predominate over residues 136–162 (EEHDDGMNDFEIIDDTNDEVEESEERE). Positions 369 to 378 (KVEIKKEDAM) are enriched in basic and acidic residues. A compositionally biased stretch (low complexity) spans 379-389 (SSRASPLSASA). The Prospero-type homeo domain occupies 435–493 (SSMLTPMHLRKAKLMFFYTRYPNSNLLKSYFPDIRFNKNNTAQLVKWFSNFREFYYNQM). A homeo-Prospero region spans residues 435-593 (SSMLTPMHLR…KEPNFLERLE (159 aa)). The 100-residue stretch at 494–593 (EKFARQALAE…KEPNFLERLE (100 aa)) folds into the Prospero domain.

The protein belongs to the Prospero homeodomain family.

It localises to the nucleus. Its function is as follows. Transcription factor involved in developmental processes. Controls the transcription of genes required for excretory canal formation. This is Homeobox protein prospero homolog 1 from Caenorhabditis elegans.